The following is a 363-amino-acid chain: MLFRIPTLFTLFLACFSLVSGVFGYSPMFGSNTIELNSKNFRKFVKAKGPSLVVFYAPWCGYCKKLVPTYQKLASNLHSLLPVTAVDCDADQNRAVCSQYQVQGFPTIKLVYPSSKGSSLSSTDYNGDRSYKSLQKFVSDSIPSKVKILTSEAKTQKFIQDAQNSSKVILISQKMKPTLLYKSLSNEFSSLPFSFMPAKANVNDLFNISAYVDTSDLPILFIKHPNNGTSFFSNSLNRDSIVEFLQSSIKDNNFSEYLATFCSKKSCIITIQDKDSDSGIDESIRKKYPKLHFVRLGRNTTVAERLEDTLDLGYSDTFLLSLKKSHYNAKPYGKPLRRWLEDIQVQQAGPSVSLPNDLLSKIK.

A mitochondrion-targeting transit peptide spans 1 to 24 (MLFRIPTLFTLFLACFSLVSGVFG). The Thioredoxin domain occupies 32–141 (NTIELNSKNF…KSLQKFVSDS (110 aa)).

It is found in the mitochondrion. The chain is Thioredoxin domain-containing protein C13F5.05, mitochondrial from Schizosaccharomyces pombe (strain 972 / ATCC 24843) (Fission yeast).